Consider the following 371-residue polypeptide: Cytokine receptor-like factor 2 (371 aa).

The first 22 residues, 1–22 (MGRLVLLWGAAVFLLGGWMALG), serve as a signal peptide directing secretion. The Extracellular segment spans residues 23 to 231 (QGGAAEGVQI…PTPPKPKLSK (209 aa)). N-linked (GlcNAc...) asparagine glycans are attached at residues asparagine 47 and asparagine 55. An intrachain disulfide couples cysteine 71 to cysteine 84. N-linked (GlcNAc...) asparagine glycans are attached at residues asparagine 101 and asparagine 169. Residues 118–211 (KPSSPKHVRF…DWSEVTCWQR (94 aa)) enclose the Fibronectin type-III domain. Residues cysteine 180 and cysteine 218 are joined by a disulfide bond. Residues 200-204 (PSDWS) carry the WSXWS motif motif. A helical transmembrane segment spans residues 232–252 (FILISSLAILLMVSLLLLSLW). The Cytoplasmic portion of the chain corresponds to 253–371 (KLWRVKKFLI…VMNDRSYVAL (119 aa)). Residues 261-269 (LIPSVPDPK) carry the Box 1 motif motif. A compositionally biased stretch (basic and acidic residues) spans 322–336 (ESPRMLDPQTEEKEA). The disordered stretch occupies residues 322-347 (ESPRMLDPQTEEKEASGGSLQLPHQP).

Belongs to the type I cytokine receptor family. Type 5 subfamily. As to quaternary structure, heterodimer of CRLF2 and IL7R. Expressed in heart, skeletal muscle, kidney and adult and fetal liver. Primarily expressed in dendrites and monocytes. Weakly expressed in T-cells.

The protein localises to the cell membrane. It is found in the secreted. Functionally, receptor for thymic stromal lymphopoietin (TSLP). Forms a functional complex with TSLP and IL7R which is capable of stimulating cell proliferation through activation of STAT3 and STAT5. Also activates JAK2. Implicated in the development of the hematopoietic system. The sequence is that of Cytokine receptor-like factor 2 (CRLF2) from Homo sapiens (Human).